The following is an 824-amino-acid chain: DNA replication helicase (824 aa).

Position 90–97 (90–97 (GTAGAGKT)) interacts with ATP.

It belongs to the herpesviridae helicase family. In terms of assembly, associates with the primase and the primase-associated factor to form the helicase-primase complex.

It is found in the host nucleus. Component of the helicase/primase complex. Unwinds the DNA at the replication forks and generates single-stranded DNA for both leading and lagging strand synthesis. The primase synthesizes short RNA primers on the lagging strand that the polymerase elongates using dNTPs. Possesses helicase-like motifs and therefore may act as the helicase subunit of the complex. This Human herpesvirus 6B (strain Z29) (HHV-6 variant B) protein is DNA replication helicase.